The chain runs to 71 residues: uncharacterized protein (71 aa).

Residues 52–71 (KEKFERKEDEKSKPKGVRED) form a disordered region.

This is an uncharacterized protein from Archaeoglobus fulgidus (strain ATCC 49558 / DSM 4304 / JCM 9628 / NBRC 100126 / VC-16).